A 360-amino-acid chain; its full sequence is Phospho-N-acetylmuramoyl-pentapeptide-transferase (360 aa).

The next 10 membrane-spanning stretches (helical) occupy residues 21–41 (YVTF…LWWG), 74–94 (MGGI…GDLG), 97–117 (YVWV…IDDY), 134–154 (YILQ…SADM), 168–188 (IMPQ…VGSS), 199–219 (GLAI…AYLS), 236–256 (AGEL…FLWF), 263–283 (VFMG…IAVL), 288–308 (ILLV…ILQV), and 338–358 (VIVR…ATLK).

It belongs to the glycosyltransferase 4 family. MraY subfamily. The cofactor is Mg(2+).

Its subcellular location is the cell inner membrane. It catalyses the reaction UDP-N-acetyl-alpha-D-muramoyl-L-alanyl-gamma-D-glutamyl-meso-2,6-diaminopimeloyl-D-alanyl-D-alanine + di-trans,octa-cis-undecaprenyl phosphate = di-trans,octa-cis-undecaprenyl diphospho-N-acetyl-alpha-D-muramoyl-L-alanyl-D-glutamyl-meso-2,6-diaminopimeloyl-D-alanyl-D-alanine + UMP. The protein operates within cell wall biogenesis; peptidoglycan biosynthesis. Functionally, catalyzes the initial step of the lipid cycle reactions in the biosynthesis of the cell wall peptidoglycan: transfers peptidoglycan precursor phospho-MurNAc-pentapeptide from UDP-MurNAc-pentapeptide onto the lipid carrier undecaprenyl phosphate, yielding undecaprenyl-pyrophosphoryl-MurNAc-pentapeptide, known as lipid I. The chain is Phospho-N-acetylmuramoyl-pentapeptide-transferase from Shewanella woodyi (strain ATCC 51908 / MS32).